We begin with the raw amino-acid sequence, 127 residues long: MSIPAELKYSKTHEWIRIEGDEAVIGITHFAQEQLGDLTFVDLPGVGDTLDVEQEMGSVESVKAASELYAPVAGEVIAVNDALASAPELVNQSPYTEGWMLRVKLAATPEDLLDATAYGELVASEAH.

The Lipoyl-binding domain occupies 22–104 (EAVIGITHFA…YTEGWMLRVK (83 aa)). Residue lysine 63 is modified to N6-lipoyllysine.

This sequence belongs to the GcvH family. The glycine cleavage system is composed of four proteins: P, T, L and H. Requires (R)-lipoate as cofactor.

Its function is as follows. The glycine cleavage system catalyzes the degradation of glycine. The H protein shuttles the methylamine group of glycine from the P protein to the T protein. This chain is Glycine cleavage system H protein, found in Nitratidesulfovibrio vulgaris (strain DP4) (Desulfovibrio vulgaris).